Here is a 385-residue protein sequence, read N- to C-terminus: 4-hydroxy-3-methylbut-2-en-1-yl diphosphate synthase (flavodoxin) 2 (385 aa).

[4Fe-4S] cluster contacts are provided by Cys281, Cys284, Cys316, and Glu323.

The protein belongs to the IspG family. It depends on [4Fe-4S] cluster as a cofactor.

It catalyses the reaction (2E)-4-hydroxy-3-methylbut-2-enyl diphosphate + oxidized [flavodoxin] + H2O + 2 H(+) = 2-C-methyl-D-erythritol 2,4-cyclic diphosphate + reduced [flavodoxin]. It functions in the pathway isoprenoid biosynthesis; isopentenyl diphosphate biosynthesis via DXP pathway; isopentenyl diphosphate from 1-deoxy-D-xylulose 5-phosphate: step 5/6. Its function is as follows. Converts 2C-methyl-D-erythritol 2,4-cyclodiphosphate (ME-2,4cPP) into 1-hydroxy-2-methyl-2-(E)-butenyl 4-diphosphate. This Streptomyces avermitilis (strain ATCC 31267 / DSM 46492 / JCM 5070 / NBRC 14893 / NCIMB 12804 / NRRL 8165 / MA-4680) protein is 4-hydroxy-3-methylbut-2-en-1-yl diphosphate synthase (flavodoxin) 2.